The following is a 359-amino-acid chain: DNA-directed RNA polymerase RPB3-11 homolog (359 aa).

In the N-terminal section; belongs to the archaeal RpoD/eukaryotic RPB3 RNA polymerase subunit family. This sequence in the C-terminal section; belongs to the archaeal RpoL/eukaryotic RPB11/RPC19 RNA polymerase subunit family. Part of the viral DNA-directed RNA polymerase that consists of 8 polII-like subunits (RPB1, RPB2, RPB3, RPB5, RPB6, RPB7, RPB9, RPB10), a capping enzyme and a termination factor.

The protein localises to the host cytoplasm. It localises to the virion. Its function is as follows. Component of the DNA-directed RNA polymerase (RNAP) that catalyzes the transcription in the cytoplasm of viral DNA into RNA using the four ribonucleoside triphosphates as substrates. The polypeptide is DNA-directed RNA polymerase RPB3-11 homolog (Ornithodoros (relapsing fever ticks)).